We begin with the raw amino-acid sequence, 167 residues long: Zinc finger CCCH domain-containing protein 3 (167 aa).

The C3H1-type zinc finger occupies 63-91; sequence AAAIGVCQHFVRTGTCKFGDSCRYFHPKP. The segment covering 89–101 has biased composition (pro residues); the sequence is PKPPPANPGPAPS. Positions 89-167 are disordered; that stretch reads PKPPPANPGP…YPPFPFVDWG (79 aa). The span at 108–120 shows a compositional bias: polar residues; sequence MAQQSNIQGSQPN. Residues 149 to 167 are compositionally biased toward pro residues; that stretch reads SLRPPPEGGYPPFPFVDWG.

The sequence is that of Zinc finger CCCH domain-containing protein 3 from Oryza sativa subsp. japonica (Rice).